An 820-amino-acid polypeptide reads, in one-letter code: Leucine--tRNA ligase (820 aa).

Positions 40–51 (PYPSGAGLHVGH) match the 'HIGH' region motif. The short motif at 601–605 (KMSKS) is the 'KMSKS' region element. Lys-604 contacts ATP.

Belongs to the class-I aminoacyl-tRNA synthetase family.

Its subcellular location is the cytoplasm. It carries out the reaction tRNA(Leu) + L-leucine + ATP = L-leucyl-tRNA(Leu) + AMP + diphosphate. This is Leucine--tRNA ligase from Chlamydia pneumoniae (Chlamydophila pneumoniae).